The primary structure comprises 267 residues: Hydrolase FUB4 (267 aa).

Active-site charge relay system residues include S93, D183, and H243.

The protein belongs to the AB hydrolase 3 family.

Its pathway is mycotoxin biosynthesis. Hydrolase; part of the gene cluster that mediates the biosynthesis of fusaric acid, a mycotoxin with low to moderate toxicity to animals and humans, but with high phytotoxic properties. L-aspartate is suggested as fusaric acid amino acid precursor that is activated and further processed to O-acetyl-L-homoserine by cluster enzymes aspartate kinase FUB3 and homoserine O-acetyltransferase FUB5, as well as enzymes of the primary metabolism. The polyketide synthase (PKS) FUB1 generates the triketide trans-2-hexenal which is presumptively released by the hydrolase FUB4 and linked to the NRPS-bound amino acid precursor by NAD(P)-dependent dehydrogenase FUB6. FUB1, FUB4, and the non-canonical NRPS Fub8 may form an enzyme complex. Further processing of the NRPS-bound intermediate might be carried out by FUB6 and the sulfhydrylase FUB7, enabling a spontaneous electrocyclization to close the carbon backbone of fusaric acid. Dihydrofusaric acid is likely to be released via reduction by the thioester reductase (TR) domain of FUB8 whereupon the final oxidation to fusaric acid may (also) be performed by the FMN-dependent dehydrogenase FUB9. The sequence is that of Hydrolase FUB4 from Gibberella moniliformis (strain M3125 / FGSC 7600) (Maize ear and stalk rot fungus).